The following is a 239-amino-acid chain: tRNA (guanine-N(7)-)-methyltransferase (239 aa).

The S-adenosyl-L-methionine site is built by Glu69, Glu94, Asp121, and Asp144. Asp144 is an active-site residue. Lys148 is a substrate binding site. The segment at 150 to 155 (RHNKRR) is interaction with RNA. Residues Asp180 and 217-220 (TKFE) contribute to the substrate site.

Belongs to the class I-like SAM-binding methyltransferase superfamily. TrmB family. As to quaternary structure, monomer.

It catalyses the reaction guanosine(46) in tRNA + S-adenosyl-L-methionine = N(7)-methylguanosine(46) in tRNA + S-adenosyl-L-homocysteine. It functions in the pathway tRNA modification; N(7)-methylguanine-tRNA biosynthesis. Functionally, catalyzes the formation of N(7)-methylguanine at position 46 (m7G46) in tRNA. In Yersinia pseudotuberculosis serotype I (strain IP32953), this protein is tRNA (guanine-N(7)-)-methyltransferase.